Here is a 234-residue protein sequence, read N- to C-terminus: tRNA (guanine-N(1)-)-methyltransferase (234 aa).

S-adenosyl-L-methionine is bound by residues Gly110 and 134–139 (IGDYVL).

This sequence belongs to the RNA methyltransferase TrmD family. Homodimer.

Its subcellular location is the cytoplasm. The enzyme catalyses guanosine(37) in tRNA + S-adenosyl-L-methionine = N(1)-methylguanosine(37) in tRNA + S-adenosyl-L-homocysteine + H(+). Specifically methylates guanosine-37 in various tRNAs. In Tropheryma whipplei (strain TW08/27) (Whipple's bacillus), this protein is tRNA (guanine-N(1)-)-methyltransferase.